The following is a 311-amino-acid chain: Forkhead box protein I2 (311 aa).

The segment at residues 99 to 193 (RPPYSYSALI…DNGNFRRKRR (95 aa)) is a DNA-binding region (fork-head). Disordered regions lie at residues 188–237 (FRRK…TTTC) and 263–294 (FSLRRPPPTAAAHSPQIPNTAPGFAPGHQTGA). The span at 219 to 231 (STPQDPQTSPSPS) shows a compositional bias: low complexity.

It localises to the nucleus. Possible transcriptional activator. The polypeptide is Forkhead box protein I2 (Mus musculus (Mouse)).